The primary structure comprises 358 residues: 3-dehydroquinate synthase (358 aa).

Residues 70-75, 104-108, 128-129, Lys-141, Lys-150, and 168-171 contribute to the NAD(+) site; these read DGEQYK, GVIGD, TT, and CLHT. Positions 183, 246, and 263 each coordinate Zn(2+).

It belongs to the sugar phosphate cyclases superfamily. Dehydroquinate synthase family. Co(2+) serves as cofactor. Requires Zn(2+) as cofactor. NAD(+) is required as a cofactor.

Its subcellular location is the cytoplasm. It carries out the reaction 7-phospho-2-dehydro-3-deoxy-D-arabino-heptonate = 3-dehydroquinate + phosphate. It functions in the pathway metabolic intermediate biosynthesis; chorismate biosynthesis; chorismate from D-erythrose 4-phosphate and phosphoenolpyruvate: step 2/7. Catalyzes the conversion of 3-deoxy-D-arabino-heptulosonate 7-phosphate (DAHP) to dehydroquinate (DHQ). In Shewanella loihica (strain ATCC BAA-1088 / PV-4), this protein is 3-dehydroquinate synthase.